The following is a 310-amino-acid chain: Putative S-adenosyl-L-methionine-dependent methyltransferase MAB_4587c (310 aa).

Residues aspartate 126 and 155–156 (DL) contribute to the S-adenosyl-L-methionine site.

This sequence belongs to the UPF0677 family.

Exhibits S-adenosyl-L-methionine-dependent methyltransferase activity. This is Putative S-adenosyl-L-methionine-dependent methyltransferase MAB_4587c from Mycobacteroides abscessus (strain ATCC 19977 / DSM 44196 / CCUG 20993 / CIP 104536 / JCM 13569 / NCTC 13031 / TMC 1543 / L948) (Mycobacterium abscessus).